The following is a 290-amino-acid chain: L-proline cis-3-hydroxylase 1 (290 aa).

Residues His107, Asp109, and His158 each contribute to the Fe cation site. Arg168 provides a ligand contact to 2-oxoglutarate.

This sequence belongs to the L-proline cis-4-/cis-3-hydroxylase family. Homodimer. Requires Fe(2+) as cofactor.

It catalyses the reaction L-proline + 2-oxoglutarate + O2 = cis-3-hydroxy-L-proline + succinate + CO2. Inhibited by metal ions such as Co(2+), Zn(2+), Ni(2+) or Cu(2+). Is also inhibited by EDTA in vitro. Unlike the procollagen-proline cis-3- and trans-4-hydroxylases from mammals, does not necessarily require L-ascorbate for activity although it does increase the activity of the enzyme. Functionally, dioxygenase that catalyzes the 2-oxoglutarate-dependent selective hydroxylation of free L-proline to cis-3-hydroxy-L-proline (cis-3-Hyp). D-proline, trans-4-hydroxy-L-proline, cis-4-hydroxy-L-proline, cis-4-hydroxy-D-proline, and 3,4-dehydro-DL-proline are not substrates. This chain is L-proline cis-3-hydroxylase 1, found in Streptomyces sp.